A 156-amino-acid polypeptide reads, in one-letter code: Cyanate hydratase (156 aa).

Catalysis depends on residues Arg-96, Glu-99, and Ser-122.

This sequence belongs to the cyanase family.

The catalysed reaction is cyanate + hydrogencarbonate + 3 H(+) = NH4(+) + 2 CO2. Catalyzes the reaction of cyanate with bicarbonate to produce ammonia and carbon dioxide. The protein is Cyanate hydratase of Photorhabdus laumondii subsp. laumondii (strain DSM 15139 / CIP 105565 / TT01) (Photorhabdus luminescens subsp. laumondii).